The chain runs to 873 residues: Leucine--tRNA ligase (873 aa).

The 'HIGH' region motif lies at 42 to 52 (PYPSGKLHMGH). Residues 628–632 (KMAKS) carry the 'KMSKS' region motif. Position 631 (Lys-631) interacts with ATP.

Belongs to the class-I aminoacyl-tRNA synthetase family.

The protein resides in the cytoplasm. The catalysed reaction is tRNA(Leu) + L-leucine + ATP = L-leucyl-tRNA(Leu) + AMP + diphosphate. The chain is Leucine--tRNA ligase from Aromatoleum aromaticum (strain DSM 19018 / LMG 30748 / EbN1) (Azoarcus sp. (strain EbN1)).